The primary structure comprises 759 residues: Fidgetin (759 aa).

Disordered regions lie at residues 89–111 (SNYSDTPSGLVNGRKNDSEPWQP), 200–237 (SQATPALPSPHPSPLHSSGLLQPPPPPPPPPALVPGYN), 258–293 (VGSGYSPGGAPPPPSAYLPSGIPAPTPLPPTTVPGY), and 337–429 (SYGQ…VMSE). 2 stretches are compositionally biased toward pro residues: residues 221–232 (QPPPPPPPPPAL) and 266–289 (GAPPPPSAYLPSGIPAPTPLPPTT). Composition is skewed to polar residues over residues 337–347 (SYGQQRSTQSP) and 382–418 (LMPSEQQRKFSSQSSRALTPPSYSTAKNSLGSRSSES). The residue at position 400 (Thr-400) is a Phosphothreonine. ATP contacts are provided by residues Ala-489 and 529-534 (GTGKTL).

This sequence belongs to the AAA ATPase family. In terms of assembly, interacts with AKAP8 (via C-terminus). In terms of tissue distribution, widely expressed.

Its subcellular location is the nucleus matrix. The protein resides in the cytoplasm. It is found in the cytoskeleton. It localises to the microtubule organizing center. The protein localises to the centrosome. Its function is as follows. ATP-dependent microtubule severing protein. Severs microtubules along their length and depolymerizes their ends, primarily the minus-end, suppressing microtubule growth from and attachment to centrosomes. Microtubule severing may promote rapid reorganization of cellular microtubule arrays and the release of microtubules from the centrosome following nucleation. Microtubule release from the mitotic spindle poles may allow depolymerization of the microtubule end proximal to the spindle pole, leading to poleward microtubule flux and poleward motion of chromosome. In Mus musculus (Mouse), this protein is Fidgetin (Fign).